The sequence spans 239 residues: tRNA (guanine-N(7)-)-methyltransferase (239 aa).

S-adenosyl-L-methionine-binding positions include G64, 87–88 (EI), 120–121 (NA), and L140. D143 is an active-site residue. 218 to 220 (SEE) is an S-adenosyl-L-methionine binding site.

This sequence belongs to the class I-like SAM-binding methyltransferase superfamily. TrmB family.

It is found in the nucleus. It carries out the reaction guanosine(46) in tRNA + S-adenosyl-L-methionine = N(7)-methylguanosine(46) in tRNA + S-adenosyl-L-homocysteine. It participates in tRNA modification; N(7)-methylguanine-tRNA biosynthesis. In terms of biological role, catalyzes the formation of N(7)-methylguanine at position 46 (m7G46) in tRNA. The polypeptide is tRNA (guanine-N(7)-)-methyltransferase (Culex quinquefasciatus (Southern house mosquito)).